The chain runs to 141 residues: Hemoglobin subunit alpha-D (141 aa).

Residues 1–141 (MLTADDKKLI…VASVLAEKYR (141 aa)) enclose the Globin domain. Heme b-binding residues include H58 and H87.

The protein belongs to the globin family. As to quaternary structure, heterotetramer of two alpha-D chains and two beta chains. As to expression, red blood cells.

In terms of biological role, involved in oxygen transport from the lung to the various peripheral tissues. This chain is Hemoglobin subunit alpha-D (HBAD), found in Rhea americana (Greater rhea).